A 393-amino-acid polypeptide reads, in one-letter code: E3 ubiquitin-protein transferase RMND5B (393 aa).

Met-1 is modified (N-acetylmethionine). In terms of domain architecture, LisH spans 116 to 148 (QQQILQMAIVEHLYQQGMLSVAEELCQESTLNV). The 58-residue stretch at 155-212 (PFLELNRILEALHEQDLGPALEWAVSHRQRLLELNSSLEFKLHRLHFIRLLAGGPEKQ) folds into the CTLH domain. The segment at 338–379 (CPILRQQTSDSNPPIKLICGHVISRDALNKLINGGKLKCPYC) adopts an RING-Gid-type zinc-finger fold.

In terms of assembly, identified in the CTLH complex that contains GID4, RANBP9 and/or RANBP10, MKLN1, MAEA, RMND5A (or alternatively its paralog RMND5B), GID8, ARMC8, WDR26 and YPEL5. Within this complex, MAEA, RMND5A (or alternatively its paralog RMND5B), GID8, WDR26, and RANBP9 and/or RANBP10 form the catalytic core, while GID4, MKLN1, ARMC8 and YPEL5 have ancillary roles.

It is found in the cytoplasm. The protein resides in the cytosol. The enzyme catalyses S-ubiquitinyl-[E2 ubiquitin-conjugating enzyme]-L-cysteine + [acceptor protein]-L-lysine = [E2 ubiquitin-conjugating enzyme]-L-cysteine + N(6)-ubiquitinyl-[acceptor protein]-L-lysine.. Functionally, core component of the CTLH E3 ubiquitin-protein ligase complex that selectively accepts ubiquitin from UBE2H and mediates ubiquitination and subsequent proteasomal degradation of the transcription factor HBP1. MAEA and RMND5A are both required for catalytic activity of the CTLH E3 ubiquitin-protein ligase complex. Catalytic activity of the complex is required for normal cell proliferation. The CTLH E3 ubiquitin-protein ligase complex is not required for the degradation of enzymes involved in gluconeogenesis, such as FBP1. This chain is E3 ubiquitin-protein transferase RMND5B (Rmnd5b), found in Mus musculus (Mouse).